Consider the following 640-residue polypeptide: MPQPSVSGMDPPFGDAFRSHTFSEQTLMSTDLLANSSDPDFMYELDREMNYQQNPRDNFLSLEDCKDIENLETFTDVLDNEDALTSNWEQWDTYCEDLTKYTKLTSCDIWGTKEVDYLGLDDFSSPYQDEEVISKTPTLAQLNSEDSQSVSDSLYYPDSLFSVKQNPLPPSSFPSKKITNRAAAPVCSSKTLQAEVPSSDCVQKASKPTSSTQIMVKTNMYHNEKVNFHVECKDYVKKAKVKINPVQQGRPLLSQVHIDAAKENTCYCGAVAKRQERRGVEPHQGRGTPALPFKETQELLLSPLTQDSPGLVATAESGSLSASTSVSDSSQKKEEHNYSLFVSDNMREQPTKYSPEDDEDDEDEFDDEDHDEGFGSEHELSENEEEEEEEEDYEDDRDDDISDTFSEPGYENDSVEDLKEMTSISSRKRGKRRYFWEYSEQLTPSQQERILRPSEWNRDTLPSNMYQKNGLHHGKYAVKKSRRTDVEDLTPNPKKLLQIGNELRKLNKVISDLTPVSELPLTARPRSRKEKNKLASRACRLKKKAQYEANKVKLWGLNTEYDNLLFVINSIKQDIVNRVQNPREEREPSMGQKLEILIKDTLGLPVAGQTSEFVNQVLGKTAEGNPTGGLVGLRIPASKV.

Residues 308 to 414 (SPGLVATAES…FSEPGYENDS (107 aa)) form a disordered region. Low complexity predominate over residues 317–329 (SGSLSASTSVSDS). Over residues 356 to 371 (EDDEDDEDEFDDEDHD) the composition is skewed to acidic residues. The segment covering 372 to 381 (EGFGSEHELS) has biased composition (basic and acidic residues). The segment covering 382–402 (ENEEEEEEEEDYEDDRDDDIS) has biased composition (acidic residues). One can recognise a bZIP domain in the interval 522 to 585 (TARPRSRKEK…VNRVQNPREE (64 aa)). Positions 524–533 (RPRSRKEKNK) are basic motif. The leucine-zipper stretch occupies residues 534-541 (LASRACRL).

The protein belongs to the bZIP family. CREBRF subfamily. In terms of assembly, interacts (via leucine-zipper domain) with CREB3 (via leucine-zipper domain); the interaction promotes CREB3 degradation. Post-translationally, probably degraded by the proteasome. As to expression, highly expressed in intestin, testis, heart and kidney, weakly in brain adipose, colon, liver, lung and skeletal.

It localises to the nucleus. In terms of biological role, acts as a negative regulator of the endoplasmic reticulum stress response or unfolded protein response (UPR). Represses the transcriptional activity of CREB3 during the UPR. Recruits CREB3 into nuclear foci. The sequence is that of CREB3 regulatory factor (Crebrf) from Mus musculus (Mouse).